Consider the following 269-residue polypeptide: Cytolethal distending toxin subunit B (269 aa).

An N-terminal signal peptide occupies residues 1–18 (MKKYIISLIVFLSFYAQA). A Nuclear localization signal motif is present at residues 195–210 (REPADLEMNLTVPVRR).

As to quaternary structure, heterotrimer of 3 subunits, CdtA, CdtB and CdtC.

It is found in the secreted. Functionally, part of the tripartite complex that is required for the CDT activity. CdtB exhibits a DNA-nicking endonuclease activity, and very probably causes DNA damage in intoxicated cells. This damage induces G2/M cell cycle arrest, chromatin fragmentation, cell distention and nucleus enlargement. This Escherichia coli protein is Cytolethal distending toxin subunit B (cdtB).